A 101-amino-acid chain; its full sequence is uncharacterized protein (101 aa).

This is an uncharacterized protein from Saccharolobus islandicus (Sulfolobus islandicus).